The following is a 336-amino-acid chain: Dihydroorotate dehydrogenase (quinone) (336 aa).

FMN is bound by residues alanine 62–lysine 66 and threonine 86. Substrate is bound at residue lysine 66. Asparagine 111–phenylalanine 115 is a binding site for substrate. The FMN site is built by asparagine 139 and asparagine 172. Asparagine 172 contacts substrate. Serine 175 acts as the Nucleophile in catalysis. A substrate-binding site is contributed by asparagine 177. FMN contacts are provided by lysine 217 and threonine 245. Residue asparagine 246–threonine 247 participates in substrate binding. Residues glycine 268, glycine 297, and tyrosine 318–serine 319 each bind FMN.

This sequence belongs to the dihydroorotate dehydrogenase family. Type 2 subfamily. Monomer. The cofactor is FMN.

The protein resides in the cell membrane. The enzyme catalyses (S)-dihydroorotate + a quinone = orotate + a quinol. It participates in pyrimidine metabolism; UMP biosynthesis via de novo pathway; orotate from (S)-dihydroorotate (quinone route): step 1/1. Functionally, catalyzes the conversion of dihydroorotate to orotate with quinone as electron acceptor. This is Dihydroorotate dehydrogenase (quinone) from Yersinia pseudotuberculosis serotype O:1b (strain IP 31758).